The chain runs to 233 residues: uncharacterized protein (233 aa).

Helical transmembrane passes span 7–27 (VPIF…LLAY), 36–56 (YEFE…ILIP), 62–82 (MFVL…KYLA), 119–139 (LIIA…AILM), 159–179 (PLYP…VGLV), and 188–208 (ILLA…APHI).

The protein resides in the cell membrane. This is an uncharacterized protein from Methanocaldococcus jannaschii (strain ATCC 43067 / DSM 2661 / JAL-1 / JCM 10045 / NBRC 100440) (Methanococcus jannaschii).